The chain runs to 277 residues: Large ribosomal subunit protein uL2 (277 aa).

Disordered stretches follow at residues 1–20 and 210–277; these read MAVKKYRPYTPSRRQMTTAD and GRSR…RGGK. A compositionally biased stretch (basic residues) spans 210 to 221; it reads GRSRWLGRKPHQ.

Belongs to the universal ribosomal protein uL2 family. Part of the 50S ribosomal subunit. Forms a bridge to the 30S subunit in the 70S ribosome.

In terms of biological role, one of the primary rRNA binding proteins. Required for association of the 30S and 50S subunits to form the 70S ribosome, for tRNA binding and peptide bond formation. It has been suggested to have peptidyltransferase activity; this is somewhat controversial. Makes several contacts with the 16S rRNA in the 70S ribosome. The protein is Large ribosomal subunit protein uL2 of Deinococcus deserti (strain DSM 17065 / CIP 109153 / LMG 22923 / VCD115).